Reading from the N-terminus, the 1464-residue chain is ABC transporter G family member 35 (1464 aa).

Residues 1 to 26 are disordered; the sequence is MDAAAEMQKVVSLRRGGGGSSSRGAA. Positions 173 to 446 constitute an ABC transporter 1 domain; sequence ANALGILPNK…FELMGFKCPE (274 aa). Residue 206–213 coordinates ATP; it reads GPPGSGKT. In terms of domain architecture, ABC transmembrane type-2 1 spans 524–737; that stretch reads ELLKANIDRE…AQNAISVNEF (214 aa). 7 consecutive transmembrane segments (helical) span residues 542 to 562, 575 to 595, 630 to 650, 662 to 682, 686 to 706, 715 to 735, and 774 to 794; these read FVYIFRACQLMVVSAIAMTVF, GVIFMGALFFSVMMIMFNGLS, IPMSFIEVGGFVFMSYYVIGF, LLMLAINQMAAALFRFVGGAA, IVANVFGSFMLLIFMVLGGFI, WWIWGYWISPMMYAQNAISVN, and IGFGALLGFIMLFNGLFTLAL. Positions 867–1119 constitute an ABC transporter 2 domain; it reads LTFDNIKYSV…ELIKYFEGIK (253 aa). An ATP-binding site is contributed by 912–919; sequence GVSGAGKT. The ABC transmembrane type-2 2 domain maps to 1192–1406; it reads NQCLACLWKM…TLYGLVASQF (215 aa). 7 helical membrane passes run 1213-1233, 1243-1263, 1299-1319, 1326-1346, 1356-1376, 1387-1407, and 1436-1456; these read AIRLFFTTVIALLFGTIFWDL, LFNAMGSMYSAVLFIGVLNSQ, FPYTLVQSIIYGIIVYSMIGF, FFWYLFFMFFTFLYFTFYGMM, VASIVSSAFYGIWNLFSGFII, WYCWICPVAWTLYGLVASQFG, and VVAVVIVAFTMLFAFLFGFAI.

Belongs to the ABC transporter superfamily. ABCG family. PDR (TC 3.A.1.205) subfamily.

It localises to the membrane. In terms of biological role, may be a general defense protein. The chain is ABC transporter G family member 35 from Oryza sativa subsp. japonica (Rice).